We begin with the raw amino-acid sequence, 153 residues long: UPF0260 protein YcgN (153 aa).

This sequence belongs to the UPF0260 family.

In Salmonella paratyphi B (strain ATCC BAA-1250 / SPB7), this protein is UPF0260 protein YcgN.